The sequence spans 395 residues: Phosphoglycerate kinase (395 aa).

Substrate is bound by residues 22 to 24 (DLN), arginine 37, 60 to 63 (HFGR), arginine 116, and arginine 149. ATP-binding positions include lysine 199, glutamate 322, and 352–355 (GGDT).

It belongs to the phosphoglycerate kinase family. As to quaternary structure, monomer.

The protein resides in the cytoplasm. It catalyses the reaction (2R)-3-phosphoglycerate + ATP = (2R)-3-phospho-glyceroyl phosphate + ADP. Its pathway is carbohydrate degradation; glycolysis; pyruvate from D-glyceraldehyde 3-phosphate: step 2/5. This is Phosphoglycerate kinase from Novosphingobium aromaticivorans (strain ATCC 700278 / DSM 12444 / CCUG 56034 / CIP 105152 / NBRC 16084 / F199).